Here is a 150-residue protein sequence, read N- to C-terminus: Single-stranded DNA-binding protein rim1, mitochondrial (150 aa).

A mitochondrion-targeting transit peptide spans 1–22 (MLFLKSSRAFSKRLFSSSTVRY). One can recognise an SSB domain in the interval 25–125 (IQRLTLTGNL…HVSADVLFYP (101 aa)). A disordered region spans residues 127–150 (NKNGDESGEETHPELDADPMINSF). Positions 128 to 141 (KNGDESGEETHPEL) are enriched in basic and acidic residues.

The protein localises to the mitochondrion. Functionally, this protein binds preferentially and cooperatively to ss-DNA. Involved in mitochondrial DNA replication. The protein is Single-stranded DNA-binding protein rim1, mitochondrial (rim1) of Schizosaccharomyces pombe (strain 972 / ATCC 24843) (Fission yeast).